We begin with the raw amino-acid sequence, 303 residues long: Sushi domain-containing protein 6 (303 aa).

Residues M1 to A39 form the signal peptide. The 65-residue stretch at S40–L104 folds into the Sushi domain. At S40–S120 the chain is on the extracellular side. Disulfide bonds link C42–C89 and C74–C102. The chain crosses the membrane as a helical span at residues I121–L141. Residues L142–A303 lie on the Cytoplasmic side of the membrane. 2 disordered regions span residues V199–G237 and G263–I282.

The protein resides in the membrane. In terms of biological role, may play a role in growth-suppressive activity and cell death. May be involved in the production of chemokine molecules in umbilical vein endothelial cells (HUVECs) cultured in THP1 monocyte LPS-induced medium. Plays a role in preventing tumor onset. This Homo sapiens (Human) protein is Sushi domain-containing protein 6.